The following is a 954-amino-acid chain: Bifunctional glutamine synthetase adenylyltransferase/adenylyl-removing enzyme (954 aa).

An adenylyl removase region spans residues 1 to 450; it reads MENISNKPLS…HFIETVGGRT (450 aa). Residues 454–954 are adenylyl transferase; sequence GADLWTQQLW…MDIYQRILVD (501 aa).

This sequence belongs to the GlnE family. It depends on Mg(2+) as a cofactor.

It carries out the reaction [glutamine synthetase]-O(4)-(5'-adenylyl)-L-tyrosine + phosphate = [glutamine synthetase]-L-tyrosine + ADP. It catalyses the reaction [glutamine synthetase]-L-tyrosine + ATP = [glutamine synthetase]-O(4)-(5'-adenylyl)-L-tyrosine + diphosphate. Involved in the regulation of glutamine synthetase GlnA, a key enzyme in the process to assimilate ammonia. When cellular nitrogen levels are high, the C-terminal adenylyl transferase (AT) inactivates GlnA by covalent transfer of an adenylyl group from ATP to specific tyrosine residue of GlnA, thus reducing its activity. Conversely, when nitrogen levels are low, the N-terminal adenylyl removase (AR) activates GlnA by removing the adenylyl group by phosphorolysis, increasing its activity. The regulatory region of GlnE binds the signal transduction protein PII (GlnB) which indicates the nitrogen status of the cell. The protein is Bifunctional glutamine synthetase adenylyltransferase/adenylyl-removing enzyme of Shewanella woodyi (strain ATCC 51908 / MS32).